Consider the following 121-residue polypeptide: Large ribosomal subunit protein bL20 (121 aa).

This sequence belongs to the bacterial ribosomal protein bL20 family.

In terms of biological role, binds directly to 23S ribosomal RNA and is necessary for the in vitro assembly process of the 50S ribosomal subunit. It is not involved in the protein synthesizing functions of that subunit. In Methylorubrum extorquens (strain PA1) (Methylobacterium extorquens), this protein is Large ribosomal subunit protein bL20.